We begin with the raw amino-acid sequence, 349 residues long: Sensory histidine kinase/phosphatase NtrB (349 aa).

Positions Ile5–Asp78 constitute a PAS domain. The Histidine kinase domain occupies Gly136 to Lys349. A Phosphohistidine; by autocatalysis modification is found at His139. Lys329 serves as a coordination point for ATP.

Post-translationally, autophosphorylated.

The protein localises to the cytoplasm. The catalysed reaction is ATP + protein L-histidine = ADP + protein N-phospho-L-histidine.. Member of the two-component regulatory system NtrB/NtrC, which controls expression of the nitrogen-regulated (ntr) genes in response to nitrogen limitation. Under conditions of nitrogen limitation, NtrB autophosphorylates and transfers the phosphoryl group to NtrC. In the presence of nitrogen, acts as a phosphatase that dephosphorylates and inactivates NtrC. The polypeptide is Sensory histidine kinase/phosphatase NtrB (glnL) (Salmonella typhi).